We begin with the raw amino-acid sequence, 318 residues long: dTDP-6-deoxy-L-talose 4-dehydrogenase (NAD(P)(+)) (318 aa).

Residues 19–20 (FI), 60–61 (DP), N95, T120, Y145, and K149 each bind NAD(+). Residues T120 and Y145 each contribute to the substrate site. The Proton acceptor role is filled by Y145.

The protein belongs to the NAD(P)-dependent epimerase/dehydratase family.

The enzyme catalyses dTDP-6-deoxy-beta-L-talose + NAD(+) = dTDP-4-dehydro-beta-L-rhamnose + NADH + H(+). It carries out the reaction dTDP-6-deoxy-beta-L-talose + NADP(+) = dTDP-4-dehydro-beta-L-rhamnose + NADPH + H(+). In terms of biological role, catalyzes the reduction of dTDP-6-deoxy-L-lyxo-4-hexulose to dTDP-6-deoxy-L-talose. Can use NAD(+) or NADP(+). In Kitasatospora kifunensis (Streptomyces kifunensis), this protein is dTDP-6-deoxy-L-talose 4-dehydrogenase (NAD(P)(+)) (tal).